The sequence spans 34 residues: Chlorotoxin-like peptide AaCtx (34 aa).

4 disulfides stabilise this stretch: C2–C19, C5–C27, C16–C32, and C20–C34.

The protein belongs to the short scorpion toxin superfamily. Chloride channel inhibitor family. In terms of tissue distribution, expressed by the venom gland.

The protein localises to the secreted. Toxin with unknown function in healthy organisms. On glioma cells, interacts with chloride channels (probably ClC-3/CLCN3) and MMP2 at the surface of glioma cells. This complex is then internalized via caveolae, thus inhibiting the chloride channels necessary for cell shrinkage and tumor propagation. Inhibits migration and invasion of U87 glioma cells expressing CLCN3/ClC-3 voltage-gated chloride channels. The polypeptide is Chlorotoxin-like peptide AaCtx (Androctonus australis (Sahara scorpion)).